A 272-amino-acid chain; its full sequence is HMP-PP phosphatase (272 aa).

The Nucleophile role is filled by Asp-8. Asp-8, Asp-10, and Asp-212 together coordinate Mg(2+).

This sequence belongs to the HAD-like hydrolase superfamily. Cof family. Requires Mg(2+) as cofactor.

The enzyme catalyses 4-amino-2-methyl-5-(diphosphooxymethyl)pyrimidine + H2O = 4-amino-2-methyl-5-(phosphooxymethyl)pyrimidine + phosphate + H(+). Functionally, catalyzes the hydrolysis of 4-amino-2-methyl-5-hydroxymethylpyrimidine pyrophosphate (HMP-PP) to 4-amino-2-methyl-5-hydroxymethylpyrimidine phosphate (HMP-P). In Salmonella arizonae (strain ATCC BAA-731 / CDC346-86 / RSK2980), this protein is HMP-PP phosphatase.